The primary structure comprises 88 residues: Co-chaperonin GroES (88 aa).

It belongs to the GroES chaperonin family. In terms of assembly, heptamer of 7 subunits arranged in a ring. Interacts with the chaperonin GroEL.

The protein localises to the cytoplasm. Together with the chaperonin GroEL, plays an essential role in assisting protein folding. The GroEL-GroES system forms a nano-cage that allows encapsulation of the non-native substrate proteins and provides a physical environment optimized to promote and accelerate protein folding. GroES binds to the apical surface of the GroEL ring, thereby capping the opening of the GroEL channel. The polypeptide is Co-chaperonin GroES (Treponema pallidum (strain Nichols)).